The primary structure comprises 204 residues: Demethylsterigmatocystin 6-O-methyltransferase stcP (204 aa).

Residues glycine 48–glycine 49, aspartate 73, aspartate 93–phenylalanine 94, and arginine 109 contribute to the S-adenosyl-L-methionine site. The Proton acceptor role is filled by histidine 113.

This sequence belongs to the class I-like SAM-binding methyltransferase superfamily. Cation-independent O-methyltransferase family.

It catalyses the reaction 6-demethylsterigmatocystin + S-adenosyl-L-methionine = sterigmatocystin + S-adenosyl-L-homocysteine + H(+). It functions in the pathway mycotoxin biosynthesis; sterigmatocystin biosynthesis. Norsolorinic acid reductase; part of the gene cluster that mediates the biosynthesis of sterigmatocystin (ST), a polyketide-derived furanocoumarin which is part of the most toxic and carcinogenic compounds among the known mycotoxins. The first step in the biosynthesis of sterigmatocystin is the production of hexanoate by the fatty acid synthase (FAS) units stcJ and stcK. The polyketide backbone is assembled by the non-reducing polyketide synthase stcA by condensation of the starter hexanoyl-CoA and 7 malonyl-CoA extender units followed by cyclization and release of norsolorinic acid. Norsolorinic acid is the first stable intermediate in the biosynthesis of sterigmatocystin and is converted into averantin (AVN) by the ketoreductase stcE which reduces the hexanoate ketone to an alcohol. Averantin is then oxidized into 5'-hydroxyaverantin (HAVN) by the cytochrome P450 monooxygenase stcF. 5'-hydroxyaverantin is further converted to 5'-oxyaverantin (OAVN) by the 5'-hydroxyaverantin dehydrogenase stcG. The next step is the conversion of OAVN into averufin (AVF) which is catalyzed by a yet to be identified enzyme. The cytochrome P450 monooxygenase stcB and the flavin-binding monooxygenase stcW are both required for the conversion of averufin to 1-hydroxyversicolorone. The esterase stcI probably catalyzes the formation of versiconal hemiacetal acetate from 1-hydroxyversicolorone. The oxydoreductase stcN then probably catalyzes the biosynthetic step from versiconal to versicolorin B (VERB). The next step is performed by the versicolorin B desaturase stcL to produce versicolorin A (VERA). The ketoreductase stcU and the cytochrome P450 monooxygenase stcS are involved in the conversion of versicolorin A to demethylsterigmatocystin. The Baeyer-Villiger oxidas stcQ and the reductase stcR might be involved in the biosynthetic step from versicolorin A to demethylsterigmatocystin. The final step in the biosynthesis of sterigmatocystin is the methylation of demethylsterigmatocystin catalyzed by the methyltransferase stcP. The protein is Demethylsterigmatocystin 6-O-methyltransferase stcP of Emericella nidulans (strain FGSC A4 / ATCC 38163 / CBS 112.46 / NRRL 194 / M139) (Aspergillus nidulans).